A 368-amino-acid polypeptide reads, in one-letter code: MQRVIIVGSTGSIGTQAIDFILKNRDSFLVVGLAASTQTSLLREQAQVLGTKNTAQGASEAAELIEATEADVVLNAITGAAGLLSTYATLKTGKRLALANKESLIMGGKYFLDMTTFKGQITPVDSEHSAIAQAMKSGKFSEVNKLILTASGGPFYDRESLEGITLKDALDHPTWNMGPMISINSATMFNKGLEIIEAHLLFGIPYSQIDVVIHPQSIVHSMVEYKDGSVIAQASVADMTLPIGYALSWPNRALNAVRPLEWGARQRWDFLPPTENSMRSINLARRAGEAGGVYPAVLNASNECAVEAFMAGKISFARIIHVTETVFNLYTKQHTNRESAKNPIEVILEEDARTRELAKTVIENMSAD.

NADPH is bound by residues T10, G11, S12, I13, Q38, and N100. K101 lines the 1-deoxy-D-xylulose 5-phosphate pocket. NADPH is bound at residue E102. Residue D125 participates in Mn(2+) binding. Positions 126, 127, 151, and 172 each coordinate 1-deoxy-D-xylulose 5-phosphate. E127 provides a ligand contact to Mn(2+). Residue G178 participates in NADPH binding. S185, N190, K191, and E194 together coordinate 1-deoxy-D-xylulose 5-phosphate. A Mn(2+)-binding site is contributed by E194.

It belongs to the DXR family. It depends on Mg(2+) as a cofactor. Requires Mn(2+) as cofactor.

The catalysed reaction is 2-C-methyl-D-erythritol 4-phosphate + NADP(+) = 1-deoxy-D-xylulose 5-phosphate + NADPH + H(+). It functions in the pathway isoprenoid biosynthesis; isopentenyl diphosphate biosynthesis via DXP pathway; isopentenyl diphosphate from 1-deoxy-D-xylulose 5-phosphate: step 1/6. Its function is as follows. Catalyzes the NADPH-dependent rearrangement and reduction of 1-deoxy-D-xylulose-5-phosphate (DXP) to 2-C-methyl-D-erythritol 4-phosphate (MEP). The polypeptide is 1-deoxy-D-xylulose 5-phosphate reductoisomerase (Tropheryma whipplei (strain Twist) (Whipple's bacillus)).